The sequence spans 323 residues: Beta-ketoacyl-[acyl-carrier-protein] synthase III (323 aa).

Active-site residues include C112 and H250. Residues Q251–R255 are ACP-binding. Residue N280 is part of the active site.

This sequence belongs to the thiolase-like superfamily. FabH family. Homodimer.

It is found in the cytoplasm. The catalysed reaction is malonyl-[ACP] + acetyl-CoA + H(+) = 3-oxobutanoyl-[ACP] + CO2 + CoA. Its pathway is lipid metabolism; fatty acid biosynthesis. Catalyzes the condensation reaction of fatty acid synthesis by the addition to an acyl acceptor of two carbons from malonyl-ACP. Catalyzes the first condensation reaction which initiates fatty acid synthesis and may therefore play a role in governing the total rate of fatty acid production. Possesses both acetoacetyl-ACP synthase and acetyl transacylase activities. Its substrate specificity determines the biosynthesis of branched-chain and/or straight-chain of fatty acids. This chain is Beta-ketoacyl-[acyl-carrier-protein] synthase III, found in Clostridium beijerinckii (strain ATCC 51743 / NCIMB 8052) (Clostridium acetobutylicum).